We begin with the raw amino-acid sequence, 147 residues long: Small ribosomal subunit protein uS12 (147 aa).

This sequence belongs to the universal ribosomal protein uS12 family. Part of the 30S ribosomal subunit.

Its function is as follows. With S4 and S5 plays an important role in translational accuracy. Located at the interface of the 30S and 50S subunits. This chain is Small ribosomal subunit protein uS12, found in Pyrobaculum islandicum (strain DSM 4184 / JCM 9189 / GEO3).